The following is a 225-amino-acid chain: Histone H1.5 (225 aa).

A disordered region spans residues 1–23; sequence MSDVAVAETPAVKTPTKASKATK. Residue S2 is modified to N-acetylserine. The segment covering 9-19 has biased composition (low complexity); that stretch reads TPAVKTPTKAS. Positions 37-113 constitute an H15 domain; the sequence is AHPPFINMIT…GANGRFRLAV (77 aa). Residues 145–156 are compositionally biased toward basic and acidic residues; it reads KKTVAKKTGDKV. The segment at 145–225 is disordered; it reads KKTVAKKTGD…RKAVGTAPKA (81 aa). Over residues 157–175 the composition is skewed to basic residues; sequence KKVKSPKRIAKPAVKKVTK. Residues 176–208 are compositionally biased toward low complexity; that stretch reads KAAAPTKSAANETAPKKAAATEAAPKKAAVTKA.

This sequence belongs to the histone H1/H5 family.

It localises to the nucleus. It is found in the chromosome. Functionally, histones H1 are necessary for the condensation of nucleosome chains into higher-order structures. The polypeptide is Histone H1.5 (hil-5) (Caenorhabditis elegans).